We begin with the raw amino-acid sequence, 258 residues long: Phosphate import ATP-binding protein PstB (258 aa).

Residues 12–253 (IQVHNLNFYY…PKMKQTEDYI (242 aa)) form the ABC transporter domain. 44–51 (GPSGCGKS) is a binding site for ATP.

It belongs to the ABC transporter superfamily. Phosphate importer (TC 3.A.1.7) family. The complex is composed of two ATP-binding proteins (PstB), two transmembrane proteins (PstC and PstA) and a solute-binding protein (PstS).

The protein resides in the cell inner membrane. The enzyme catalyses phosphate(out) + ATP + H2O = ADP + 2 phosphate(in) + H(+). Functionally, part of the ABC transporter complex PstSACB involved in phosphate import. Responsible for energy coupling to the transport system. The protein is Phosphate import ATP-binding protein PstB of Photorhabdus laumondii subsp. laumondii (strain DSM 15139 / CIP 105565 / TT01) (Photorhabdus luminescens subsp. laumondii).